The chain runs to 320 residues: Aspartate carbamoyltransferase catalytic subunit (320 aa).

Carbamoyl phosphate-binding residues include R65 and T66. Residue K93 participates in L-aspartate binding. Residues R115, H143, and Q146 each coordinate carbamoyl phosphate. Residues R176 and R230 each coordinate L-aspartate. Residues G271 and P272 each contribute to the carbamoyl phosphate site.

This sequence belongs to the aspartate/ornithine carbamoyltransferase superfamily. ATCase family. As to quaternary structure, heterododecamer (2C3:3R2) of six catalytic PyrB chains organized as two trimers (C3), and six regulatory PyrI chains organized as three dimers (R2).

The enzyme catalyses carbamoyl phosphate + L-aspartate = N-carbamoyl-L-aspartate + phosphate + H(+). The protein operates within pyrimidine metabolism; UMP biosynthesis via de novo pathway; (S)-dihydroorotate from bicarbonate: step 2/3. Its function is as follows. Catalyzes the condensation of carbamoyl phosphate and aspartate to form carbamoyl aspartate and inorganic phosphate, the committed step in the de novo pyrimidine nucleotide biosynthesis pathway. The chain is Aspartate carbamoyltransferase catalytic subunit from Maricaulis maris (strain MCS10) (Caulobacter maris).